We begin with the raw amino-acid sequence, 229 residues long: Prolactin (229 aa).

The first 30 residues, 1–30, serve as a signal peptide directing secretion; sequence MDSKVSSQKGSRLLLLLVVSNLLLCQGVVS. Residues C34 and C41 are joined by a disulfide bond. Residues S56, S64, and S120 each carry the phosphoserine modification. Disulfide bonds link C88-C204 and C221-C229.

The protein belongs to the somatotropin/prolactin family. As to quaternary structure, interacts with PRLR.

It is found in the secreted. In terms of biological role, prolactin acts primarily on the mammary gland by promoting lactation. The polypeptide is Prolactin (PRL) (Cervus elaphus (Red deer)).